We begin with the raw amino-acid sequence, 149 residues long: Cytochrome c oxidase subunit 5A, mitochondrial (149 aa).

It belongs to the cytochrome c oxidase subunit 5A family. In terms of assembly, component of the cytochrome c oxidase (complex IV, CIV), a multisubunit enzyme composed of a catalytic core of 3 subunits and several supernumerary subunits. The complex exists as a monomer or a dimer and forms supercomplexes (SCs) in the inner mitochondrial membrane with ubiquinol-cytochrome c oxidoreductase (cytochrome b-c1 complex, complex III, CIII).

The protein resides in the mitochondrion inner membrane. It functions in the pathway energy metabolism; oxidative phosphorylation. Its function is as follows. Component of the cytochrome c oxidase, the last enzyme in the mitochondrial electron transport chain which drives oxidative phosphorylation. The respiratory chain contains 3 multisubunit complexes succinate dehydrogenase (complex II, CII), ubiquinol-cytochrome c oxidoreductase (cytochrome b-c1 complex, complex III, CIII) and cytochrome c oxidase (complex IV, CIV), that cooperate to transfer electrons derived from NADH and succinate to molecular oxygen, creating an electrochemical gradient over the inner membrane that drives transmembrane transport and the ATP synthase. Cytochrome c oxidase is the component of the respiratory chain that catalyzes the reduction of oxygen to water. Electrons originating from reduced cytochrome c in the intermembrane space (IMS) are transferred via the dinuclear copper A center (CU(A)) of subunit 2 and heme A of subunit 1 to the active site in subunit 1, a binuclear center (BNC) formed by heme A3 and copper B (CU(B)). The BNC reduces molecular oxygen to 2 water molecules using 4 electrons from cytochrome c in the IMS and 4 protons from the mitochondrial matrix. This is Cytochrome c oxidase subunit 5A, mitochondrial from Drosophila melanogaster (Fruit fly).